The following is a 137-amino-acid chain: Phosphoribosyl-AMP cyclohydrolase (137 aa).

Residue Asp84 coordinates Mg(2+). Zn(2+) is bound at residue Cys85. Residues Asp86 and Asp88 each contribute to the Mg(2+) site. Residues Cys101 and Cys108 each contribute to the Zn(2+) site.

Belongs to the PRA-CH family. As to quaternary structure, homodimer. It depends on Mg(2+) as a cofactor. The cofactor is Zn(2+).

The protein resides in the cytoplasm. The catalysed reaction is 1-(5-phospho-beta-D-ribosyl)-5'-AMP + H2O = 1-(5-phospho-beta-D-ribosyl)-5-[(5-phospho-beta-D-ribosylamino)methylideneamino]imidazole-4-carboxamide. It participates in amino-acid biosynthesis; L-histidine biosynthesis; L-histidine from 5-phospho-alpha-D-ribose 1-diphosphate: step 3/9. Its function is as follows. Catalyzes the hydrolysis of the adenine ring of phosphoribosyl-AMP. This chain is Phosphoribosyl-AMP cyclohydrolase, found in Chlorobium phaeovibrioides (strain DSM 265 / 1930) (Prosthecochloris vibrioformis (strain DSM 265)).